A 171-amino-acid chain; its full sequence is Cation channel sperm-associated auxiliary subunit TMEM249 (171 aa).

Residues 1-2 (ML) lie on the Cytoplasmic side of the membrane. The helical transmembrane segment at 3 to 17 (FIICLVFISCNVLRE) threads the bilayer. The Extracellular portion of the chain corresponds to 18–28 (VKYQETWCFPA). A helical transmembrane segment spans residues 29 to 40 (YGMVIGLWLMLS). Over 41-171 (SIPQRRLVLN…TKSSVNDLDV (131 aa)) the chain is Cytoplasmic.

As to quaternary structure, component of the CatSper complex or CatSpermasome composed of the core pore-forming members CATSPER1, CATSPER2, CATSPER3 and CATSPER4 as well as auxiliary members CATSPERB, CATSPERG2, CATSPERD, CATSPERE, CATSPERZ, C2CD6/CATSPERT, SLCO6C1, TMEM249, TMEM262 and EFCAB9. HSPA1 may be an additional auxiliary complex member. The core complex members CATSPER1, CATSPER2, CATSPER3 and CATSPER4 form a heterotetrameric channel. The auxiliary CATSPERB, CATSPERG2, CATSPERD and CATSPERE subunits form a pavilion-like structure over the pore which stabilizes the complex through interactions with CATSPER4, CATSPER3, CATSPER1 and CATSPER2 respectively. SLCO6C1 interacts with CATSPERE and TMEM262/CATSPERH interacts with CATSPERB, further stabilizing the complex. C2CD6/CATSPERT interacts at least with CATSPERD and is required for targeting the CatSper complex in the flagellar membrane.

The protein localises to the cell projection. The protein resides in the cilium. Its subcellular location is the flagellum membrane. In terms of biological role, auxiliary component of the CatSper complex, a complex involved in sperm cell hyperactivation. This Mus musculus (Mouse) protein is Cation channel sperm-associated auxiliary subunit TMEM249.